The following is a 141-amino-acid chain: Hemoglobin subunit beta-C (141 aa).

The 141-residue stretch at 1–141 folds into the Globin domain; sequence PNKALITGFW…VASALAHRYH (141 aa). Residues His-58 and His-87 each contribute to the heme b site.

This sequence belongs to the globin family. In terms of assembly, heterotetramer of two alpha chains and two beta chains. As to expression, red blood cells.

Involved in oxygen transport from the lung to the various peripheral tissues. The polypeptide is Hemoglobin subunit beta-C (Ammotragus lervia (Barbary sheep)).